The following is a 91-amino-acid chain: Probable Fe(2+)-trafficking protein (91 aa).

This sequence belongs to the Fe(2+)-trafficking protein family. Monomer.

Its function is as follows. Could be a mediator in iron transactions between iron acquisition and iron-requiring processes, such as synthesis and/or repair of Fe-S clusters in biosynthetic enzymes. In Escherichia coli O7:K1 (strain IAI39 / ExPEC), this protein is Probable Fe(2+)-trafficking protein.